The sequence spans 170 residues: Protein SprT (170 aa).

Positions 22 to 163 constitute a SprT-like domain; sequence LQQANLTLQT…RCRRCGKTLR (142 aa). Histidine 78 provides a ligand contact to Zn(2+). Glutamate 79 is an active-site residue. Histidine 82 is a binding site for Zn(2+).

Belongs to the SprT family. The cofactor is Zn(2+).

Its subcellular location is the cytoplasm. The protein is Protein SprT of Pectobacterium atrosepticum (strain SCRI 1043 / ATCC BAA-672) (Erwinia carotovora subsp. atroseptica).